The chain runs to 66 residues: Beta-toxin Chui4 (66 aa).

The region spanning 1–66 is the LCN-type CS-alpha/beta domain; that stretch reads KEGYLVELGT…VWPLKNKTCK (66 aa). Disulfide bonds link C12–C65, C16–C41, C25–C46, and C29–C48.

This sequence belongs to the long (4 C-C) scorpion toxin superfamily. Sodium channel inhibitor family. Beta subfamily. In terms of tissue distribution, expressed by the venom gland.

Its subcellular location is the secreted. Its function is as follows. Beta toxins bind voltage-independently at site-4 of sodium channels (Nav) and shift the voltage of activation toward more negative potentials thereby affecting sodium channel activation and promoting spontaneous and repetitive firing. Acts on human sodium channel Nav1.6/SCN8A. Also able to weakly shift the activation curves of human Nav1.2/SCN2A and Nav1.4/SCN4A. This Centruroides huichol (Scorpion) protein is Beta-toxin Chui4.